Reading from the N-terminus, the 196-residue chain is NADH-quinone oxidoreductase subunit B (196 aa).

The [4Fe-4S] cluster site is built by C75, C76, C140, and C170.

It belongs to the complex I 20 kDa subunit family. As to quaternary structure, NDH-1 is composed of 14 different subunits. Subunits NuoB, C, D, E, F, and G constitute the peripheral sector of the complex. It depends on [4Fe-4S] cluster as a cofactor.

The protein localises to the cell inner membrane. It carries out the reaction a quinone + NADH + 5 H(+)(in) = a quinol + NAD(+) + 4 H(+)(out). Its function is as follows. NDH-1 shuttles electrons from NADH, via FMN and iron-sulfur (Fe-S) centers, to quinones in the respiratory chain. Couples the redox reaction to proton translocation (for every two electrons transferred, four hydrogen ions are translocated across the cytoplasmic membrane), and thus conserves the redox energy in a proton gradient. This Caulobacter sp. (strain K31) protein is NADH-quinone oxidoreductase subunit B.